Here is a 2339-residue protein sequence, read N- to C-terminus: Voltage-dependent N-type calcium channel subunit alpha-1B (2339 aa).

The tract at residues 1 to 37 (MVRFGDELGGRYGGPGGGERARGGGAGGAGGPGPGGL) is disordered. At 1 to 90 (MVRFGDELGG…DNVVRKYAKR (90 aa)) the chain is on the cytoplasmic side. Residues 10-37 (GRYGGPGGGERARGGGAGGAGGPGPGGL) are compositionally biased toward gly residues. Arg22 carries the post-translational modification Omega-N-methylarginine. An I repeat occupies 82 to 359 (NVVRKYAKRI…LVLGVLSGEF (278 aa)). A helical transmembrane segment spans residues 91 to 114 (ITEWPPFEYMILATIIANCIVLAL). The Extracellular segment spans residues 115–131 (EQHLPDGDKTPMSERLD). A helical transmembrane segment spans residues 132–152 (DTEPYFIGIFCFEAGIKIIAL). The Cytoplasmic segment spans residues 153 to 163 (GFVFHKGSYLR). The chain crosses the membrane as a helical span at residues 164-182 (NGWNVMDFVVVLTGILATA). Topologically, residues 183 to 187 (GTDFD) are extracellular. The chain crosses the membrane as a helical span at residues 188–211 (LRTLRAVRVLRPLKLVSGIPSLQV). Over 212–221 (VLKSIMKAMV) the chain is Cytoplasmic. The helical transmembrane segment at 222-244 (PLLQIGLLLFFAILMFAIIGLEF) threads the bilayer. Residues 245–331 (YMGKFHKACF…NTNDAAGNTW (87 aa)) lie on the Extracellular side of the membrane. Asn256 carries N-linked (GlcNAc...) asparagine glycosylation. A helical transmembrane segment spans residues 332 to 356 (NWLYFIPLIIIGSFFMLNLVLGVLS). The Cytoplasmic segment spans residues 357–482 (GEFAKERERV…FFIRRMVKAQ (126 aa)). Positions 379–396 (QQIERELNGYLEWIFKAE) are binding to the beta subunit. Residue Ser411 is modified to Phosphoserine. 451-458 (ASLKSGKT) serves as a coordination point for ATP. The II repeat unit spans residues 468–712 (EKMFRFFIRR…VFLAIAVDNL (245 aa)). A helical transmembrane segment spans residues 483 to 501 (SFYWVVLCVVALNTLCVAM). Residues 502–511 (VHYNQPRRLT) are Extracellular-facing. Residues 512–534 (TTLYFAEFVFLGLFLTEMSLKMY) form a helical membrane-spanning segment. At 535 to 544 (GLGPRSYFRS) the chain is on the cytoplasmic side. Ser544 contacts a 1,2-diacyl-sn-glycero-3-phospho-(1D-myo-inositol-4,5-bisphosphate). Residues 545 to 566 (SFNCFDFGVIVGSVFEVVWAAI) traverse the membrane as a helical segment. Residues 567–573 (KPGSSFG) are Extracellular-facing. The chain crosses the membrane as a helical span at residues 574 to 586 (ISVLRALRLLRIF). A 1,2-diacyl-sn-glycero-3-phospho-(1D-myo-inositol-4,5-bisphosphate) is bound by residues Arg584 and Lys587. At 587-604 (KVTKYWSSLRNLVVSLLN) the chain is on the cytoplasmic side. Residues 605–630 (SMKSIISLLFLLFLFIVVFALLGMQL) form a helical membrane-spanning segment. At 631-682 (FGGQFNFQDETPTTNFDTFPAAILTVFQILTGEDWNAVMYHGIESQGGVSKG) the chain is on the extracellular side. The chain crosses the membrane as a helical span at residues 683 to 709 (MFSSFYFIVLTLFGNYTLLNVFLAIAV). Over 710-1151 (DNLANAQELT…FCHYIVTMRY (442 aa)) the chain is Cytoplasmic. Residues Ser745, Ser748, and Ser783 each carry the phosphoserine modification. Composition is skewed to basic and acidic residues over residues 816–826 (PLVVELGRDGA), 857–886 (KDKT…EERP), 922–932 (GSPEEAAEREP), and 965–976 (GPREAESGEEPA). 2 disordered regions span residues 816 to 1038 (PLVV…VTVG) and 1054 to 1076 (QPED…DPNT). Over residues 977-986 (RRHRARHKAQ) the composition is skewed to basic residues. Over residues 990–1029 (EAVEKETTEKEATEKEAEIVEADKEKELRNHQPREPHCDL) the composition is skewed to basic and acidic residues. Residue Ser1069 is modified to Phosphoserine. The stretch at 1137 to 1419 (NLLRRFCHYI…IFVALIIITF (283 aa)) is one III repeat. The chain crosses the membrane as a helical span at residues 1152 to 1170 (FEVVILVVIALSSIALAAE). At 1171 to 1178 (DPVRTDSP) the chain is on the extracellular side. Residues 1179–1203 (RNNALKYLDYIFTGVFTFEMVIKMI) traverse the membrane as a helical segment. Over 1204–1217 (DLGLLLHPGAYFRD) the chain is Cytoplasmic. A helical membrane pass occupies residues 1218 to 1238 (LWNILDFIVVSGALVAFAFSG). Over 1239–1244 (SKGKDI) the chain is Extracellular. Residues 1245-1265 (NTIKSLRVLRVLRPLKTIKRL) traverse the membrane as a helical segment. Topologically, residues 1266–1283 (PKLKAVFDCVVNSLKNVL) are cytoplasmic. The chain crosses the membrane as a helical span at residues 1284–1303 (NILIVYMLFMFIFAVIAVQL). Topologically, residues 1304–1390 (FKGKFFYCTD…EQGPSPGYRM (87 aa)) are extracellular. The helical transmembrane segment at 1391 to 1416 (ELSIFYVVYFVVFPFFFVNIFVALII) threads the bilayer. Residues 1417–1471 (ITFQEQGDKVMSECSLEKNERACIDFAISAKPLTRYMPQNRQSFQYKTWTFVVSP) lie on the Cytoplasmic side of the membrane. An IV repeat occupies 1456-1711 (NRQSFQYKTW…LFVAVIMDNF (256 aa)). Residues 1472-1490 (PFEYFIMAMIALNTVVLMM) traverse the membrane as a helical segment. The Extracellular segment spans residues 1491–1498 (KFYDAPYE). A helical transmembrane segment spans residues 1499–1523 (YELMLKCLNIVFTSMFSMECVLKII). Residues 1524–1533 (AFGVLNYFRD) lie on the Cytoplasmic side of the membrane. The helical transmembrane segment at 1534 to 1555 (AWNVFDFVTVLGSITDILVTEI) threads the bilayer. At 1556 to 1563 (AETNNFIN) the chain is on the extracellular side. Asn1563 is a glycosylation site (N-linked (GlcNAc...) asparagine). A helical transmembrane segment spans residues 1564-1582 (LSFLRLFRAARLIKLLRQG). At 1583–1601 (YTIRILLWTFVQSFKALPY) the chain is on the cytoplasmic side. Residues 1602-1621 (VCLLIAMLFFIYAIIGMQVF) form a helical membrane-spanning segment. At 1622–1683 (GNIALDDDTS…ANATECGSDF (62 aa)) the chain is on the extracellular side. Asn1675 is a glycosylation site (N-linked (GlcNAc...) asparagine). The helical transmembrane segment at 1684–1707 (AYFYFVSFIFLCSFLMLNLFVAVI) threads the bilayer. Topologically, residues 1708–2339 (MDNFEYLTRD…YHHPDQDHWC (632 aa)) are cytoplasmic. In terms of domain architecture, EF-hand spans 1724–1759 (HHLDEFIRVWAEYDPAACGRISYNDMFEMLKHMSPP). Asp1737, Arg1743, and Asp1748 together coordinate Ca(2+). A compositionally biased stretch (polar residues) spans 1916-1931 (SSTSLSNGGAIQNQES). Disordered regions lie at residues 1916–1968 (SSTS…VGRS) and 1981–2206 (TRRG…YKTA). Over residues 1946–1960 (DAPHEARPPLERGHS) the composition is skewed to basic and acidic residues. Residues 2049–2063 (SHHHHHRCHRRRDRK) show a composition bias toward basic residues. Ser2066 carries the post-translational modification Phosphoserine. Basic and acidic residues predominate over residues 2098–2116 (CRRERERRQERGRSQERRQ). Residues 2143–2153 (PSLSSHPTSPT) show a composition bias toward low complexity. The span at 2164–2180 (GSGSVNGSPLLSTSGAS) shows a compositional bias: polar residues. A phosphoserine mark is found at Ser2224, Ser2233, and Ser2256.

Belongs to the calcium channel alpha-1 subunit (TC 1.A.1.11) family. CACNA1B subfamily. As to quaternary structure, multisubunit complex consisting of alpha-1, alpha-2, beta and delta subunits in a 1:1:1:1 ratio. The channel activity is directed by the pore-forming and voltage-sensitive alpha-1 subunit. In many cases, this subunit is sufficient to generate voltage-sensitive calcium channel activity. The auxiliary subunits beta and alpha-2/delta linked by a disulfide bridge regulate the channel activity. Interacts with RIMS1. Interacts with FMR1 (via C-terminus); this interaction induces a decrease in the number of presynaptic functional CACNA1B channels at the cell surface. In terms of processing, phosphorylated in vitro by CaM-kinase II, PKA, PKC and CGPK. In terms of tissue distribution, isoform Alpha-1b-1 and isoform Alpha-1b-2 are expressed in the central nervous system, but not in skeletal muscle or aorta. Expressed in the cerebral white matter, cortex, hippocampus, basal ganglia, and cerebellum.

It is found in the membrane. It catalyses the reaction Ca(2+)(in) = Ca(2+)(out). With respect to regulation, is specifically blocked by omega-conotoxin GVIA. Is specifically blocked by omega-conotoxin MVIIA (ziconotide). Is insensitive to dihydropyridines (DHP). Its activity is regulated as follows. Is specifically blocked by omega-conotoxin MVIIA (ziconotide). Is insensitive to dihydropyridines (DHP). In terms of biological role, voltage-sensitive calcium channels (VSCC) mediate the entry of calcium ions into excitable cells and are also involved in a variety of calcium-dependent processes, including muscle contraction, hormone or neurotransmitter release, gene expression, cell motility, cell division and cell death. This alpha-1B subunit gives rise to N-type calcium currents. N-type calcium channels belong to the 'high-voltage activated' (HVA) group. They are involved in pain signaling. Calcium channels containing alpha-1B subunit may play a role in directed migration of immature neurons. Mediates Ca(2+) release probability at hippocampal neuronal soma and synaptic terminals. Its function is as follows. Voltage-sensitive calcium channels (VSCC) mediate the entry of calcium ions into excitable cells and are also involved in a variety of calcium-dependent processes, including muscle contraction, hormone or neurotransmitter release, gene expression, cell motility, cell division and cell death. This alpha-1B subunit gives rise to N-type calcium currents. The protein is Voltage-dependent N-type calcium channel subunit alpha-1B (CACNA1B) of Homo sapiens (Human).